The sequence spans 257 residues: Acyl-[acyl-carrier-protein]--UDP-N-acetylglucosamine O-acyltransferase (257 aa).

Belongs to the transferase hexapeptide repeat family. LpxA subfamily. In terms of assembly, homotrimer.

Its subcellular location is the cytoplasm. The enzyme catalyses a (3R)-hydroxyacyl-[ACP] + UDP-N-acetyl-alpha-D-glucosamine = a UDP-3-O-[(3R)-3-hydroxyacyl]-N-acetyl-alpha-D-glucosamine + holo-[ACP]. It participates in glycolipid biosynthesis; lipid IV(A) biosynthesis; lipid IV(A) from (3R)-3-hydroxytetradecanoyl-[acyl-carrier-protein] and UDP-N-acetyl-alpha-D-glucosamine: step 1/6. Involved in the biosynthesis of lipid A, a phosphorylated glycolipid that anchors the lipopolysaccharide to the outer membrane of the cell. The chain is Acyl-[acyl-carrier-protein]--UDP-N-acetylglucosamine O-acyltransferase from Fusobacterium nucleatum subsp. nucleatum (strain ATCC 25586 / DSM 15643 / BCRC 10681 / CIP 101130 / JCM 8532 / KCTC 2640 / LMG 13131 / VPI 4355).